The chain runs to 243 residues: Asnovolin H synthase nvfL (243 aa).

7 helical membrane-spanning segments follow: residues 20-42, 51-71, 75-95, 112-132, 138-160, 169-189, and 205-225; these read ANTL…AYYS, ALIP…IHCP, FVRI…YAAI, LPFI…ALAA, IAFV…SQLL, SYVV…MVTI, and LLLW…FCFY.

Belongs to the paxB family.

It is found in the membrane. The catalysed reaction is (3R)-[(10S)-11-epoxyfarnesyl]-2,3,5-trimethyl-6-oxido-4-oxocyclohexa-1,5-diene-1-carboxylate + H(+) = asnovolin H. Its pathway is secondary metabolite biosynthesis; terpenoid biosynthesis. Its function is as follows. Terpene cyclase; part of the gene cluster that mediates the biosynthesis of novofumigatonin, a heavily oxygenated meroterpenoid containing a unique orthoester moiety. The first step of the pathway is the synthesis of 3,5-dimethylorsellinic acid (DMOA) by the polyketide synthase nvfA via condensation of one acetyl-CoA starter unit with 3 malonyl-CoA units and 2 methylations. DMOA is then converted to farnesyl-DMOA by the farnesyltransferase nvfB. Epoxydation by FAD-dependent monooxygenase nvfK, followed by a protonation-initiated cyclization catalyzed by the terpene cyclase nvfL leads to the production of asnavolin H. The short chain dehydrogenase nvfC then as a 3-OH dehydrogenase of asnovolin H to yield chemesin D. There are two branches to synthesize asnovolin A from chemesin D. In one branch, chemesin D undergoes Baeyer-Villiger oxidation by nvfH, methylation by nvfJ, and enoyl reduction by the nvfM D enoylreductase that reduces the double bond between C-5'and C-6', to form respectively asnovolin I, asnovolin K, and asnovolin A. In the other branch, the methylation precedes the Baeyer-Villiger oxidation and the enoyl reduction to yield asnovolin A via the asnovolin J intermediate. Asnovolin A is further converted to fumigatonoid A by the Fe(II)/2-oxoglutarate-dependent dioxygenase nvfI that catalyzes an endoperoxidation reaction. The alpha/beta hydrolase nvfD then acts as an epimerase that converts fumigatonoid A to its C-5' epimer, which then undergoes spontaneous or nvfD-catalyzed lactonization. The following step utilizes the ketoreductase nvfG to produce fumigatonoid B. The dioxygenase nvfE further converts fumigatonoid B into fumigatonoid C. Finally the Fe(II)/2-oxoglutarate-dependent dioxygenase nvfF catalyzes two rounds of oxidation to transform fumigatonoid C into the end product, novofumigatonin A. This is Asnovolin H synthase nvfL from Aspergillus novofumigatus (strain IBT 16806).